Reading from the N-terminus, the 296-residue chain is MLKDEYGRVVTNLRIAVTKKCNLRCFYCHKEGESNPGEEISAERIVEIARAFKELGVRKLKITGGEPLLRKDLPDIILNLPEFEEISMTTNGILLEKYAEELRECGLSRVNVSLDTLDAEKYRWITGGGEVQKVVNGIEKACEVGLTPVKINMLVLGGVNDNEVDELLEFTNSFNRGNTKAILQVIELVPFPGFEKYFFDISTIEEKYARMATQRRVRAMHRRTQYFTPKGVIEFVKPMDNTAFCMHCNRMRVTSDGKLKPCLLRNETITIDGKHGEELARAIIETVRKREPYFKG.

A Radical SAM core domain is found at 5-230 (EYGRVVTNLR…HRRTQYFTPK (226 aa)). Arg-14 is a binding site for GTP. Residues Cys-21 and Cys-25 each coordinate [4Fe-4S] cluster. Position 27 (Tyr-27) interacts with S-adenosyl-L-methionine. Cys-28 is a binding site for [4Fe-4S] cluster. Lys-61 is a binding site for GTP. Gly-65 is a binding site for S-adenosyl-L-methionine. Residue Thr-89 coordinates GTP. Residue Ser-113 coordinates S-adenosyl-L-methionine. Residue Lys-150 participates in GTP binding. Residues Cys-245 and Cys-248 each contribute to the [4Fe-4S] cluster site. Position 250 to 252 (250 to 252 (RMR)) interacts with GTP. Cys-262 is a binding site for [4Fe-4S] cluster.

The protein belongs to the radical SAM superfamily. MoaA family. It depends on [4Fe-4S] cluster as a cofactor.

It catalyses the reaction GTP + AH2 + S-adenosyl-L-methionine = (8S)-3',8-cyclo-7,8-dihydroguanosine 5'-triphosphate + 5'-deoxyadenosine + L-methionine + A + H(+). Its pathway is cofactor biosynthesis; molybdopterin biosynthesis. Functionally, catalyzes the cyclization of GTP to (8S)-3',8-cyclo-7,8-dihydroguanosine 5'-triphosphate. The chain is Probable GTP 3',8-cyclase from Archaeoglobus fulgidus (strain ATCC 49558 / DSM 4304 / JCM 9628 / NBRC 100126 / VC-16).